Reading from the N-terminus, the 1007-residue chain is Glutamate receptor ionotropic, delta-2 (1007 aa).

The first 23 residues, 1 to 23 (MEVFPFLLVLSVWWSRTWDSANA), serve as a signal peptide directing secretion. The interval 24–345 (DSIIHIGAIF…NAFHKKLEDR (322 aa)) is interaction with CBLN1 homotrimer. At 24 to 566 (DSIIHIGAIF…DMFACLAPFD (543 aa)) the chain is on the extracellular side. 3 cysteine pairs are disulfide-bonded: Cys-83–Cys-355, Cys-99–Cys-131, and Cys-298–Cys-310. N-linked (GlcNAc...) asparagine glycosylation occurs at Asn-293. Residue Asn-426 is glycosylated (N-linked (GlcNAc...) asparagine). The Ca(2+) site is built by Glu-531, Val-534, and Asp-535. Residues 567-587 (LSLWACIAGTVLLVGLLVYLL) form a helical membrane-spanning segment. At 588-635 (NWLNPPRLQMGSMTSTTLYNSMWFVYGSFVQQGGEVPYTTLATRMMMG) the chain is on the cytoplasmic side. A helical membrane pass occupies residues 636-656 (AWWLFALIVISSYTANLAAFL). The Extracellular portion of the chain corresponds to 657 to 830 (TITRIESSIQ…QKGGALDIKS (174 aa)). 2 N-linked (GlcNAc...) asparagine glycosylation sites follow: Asn-713 and Asn-716. Asp-753, Asp-755, and Ser-757 together coordinate Ca(2+). A helical transmembrane segment spans residues 831 to 851 (FAGVFCILAAGIVLSCFIAML). Residues 852-1007 (ETWWNKRKGS…GNDPDRGTSI (156 aa)) lie on the Cytoplasmic side of the membrane. Phosphoserine is present on Ser-883. Thr-886 bears the Phosphothreonine mark. Residue Ser-890 is modified to Phosphoserine. The segment at 921–991 (DFRNTHITTT…MSSIPYQPTP (71 aa)) is interaction with AP4M1. The PDZ-binding motif lies at 1005–1007 (TSI). Ser-1006 carries the phosphoserine modification.

It belongs to the glutamate-gated ion channel (TC 1.A.10.1) family. GRID2 subfamily. As to quaternary structure, tetramer; dimer of dimers. Interacts with EML2, MAGI2 (via PDZ domains) and AP4M1. Interacts with BECN1, GOPC, GRID2IP, SHANK1 and SHANK2. Interacts with CBLN2, but not with CBLN4. Interacts with CBLN1 (via C1q domain); the interaction is CBLN1-NRX1 complex formation-dependent; CBLN1-binding is calcium-independent; CBLN1 hexamers anchor GRID2 N-terminal domain dimers to monomeric NRXN1 isoform beta; promotes synaptogenesis and mediates the D-Serine-dependent long term depression signals and AMPA receptor endocytosis.

Its subcellular location is the postsynaptic cell membrane. The enzyme catalyses Ca(2+)(in) = Ca(2+)(out). It carries out the reaction Na(+)(in) = Na(+)(out). Member of the ionotropic glutamate receptor family, which plays a crucial role in synaptic organization and signal transduction in the central nervous system. Although it shares structural features with ionotropic glutamate receptors, does not bind glutamate as a primary ligand. Promotes synaptogenesis and mediates the D-Serine-dependent long term depression signals and AMPA receptor endocytosis of cerebellar parallel fiber-Purkinje cell (PF-PC) synapses through the NRX1B-CBLN1-GRID2 triad complex. In the presence of neurexins and cerebellins, forms cation-selective channels that are proposed to be gated by glycine and D-serine. However, recent research disputes this ligand-gated cation channel activity. Cation-selective ion channel activity can be triggered by GRM1 in Purkinje cells. The sequence is that of Glutamate receptor ionotropic, delta-2 (GRID2) from Homo sapiens (Human).